Consider the following 126-residue polypeptide: Large ribosomal subunit protein bL17 (126 aa).

This sequence belongs to the bacterial ribosomal protein bL17 family. As to quaternary structure, part of the 50S ribosomal subunit. Contacts protein L32.

The protein is Large ribosomal subunit protein bL17 of Aliivibrio salmonicida (strain LFI1238) (Vibrio salmonicida (strain LFI1238)).